Here is a 193-residue protein sequence, read N- to C-terminus: Signal peptidase I (193 aa).

At 1 to 25 (MTEEQKPTSEKSVKRKSNTYWEWGK) the chain is on the cytoplasmic side. A helical membrane pass occupies residues 26–42 (AIIIAVALALLIRHFLF). The Extracellular portion of the chain corresponds to 43–193 (EPYLVEGSSM…FPFHDMRQTK (151 aa)). Residues S51 and K93 contribute to the active site.

Belongs to the peptidase S26 family.

The protein resides in the cell membrane. The catalysed reaction is Cleavage of hydrophobic, N-terminal signal or leader sequences from secreted and periplasmic proteins.. The chain is Signal peptidase I (sipS2) from Bacillus amyloliquefaciens (Bacillus velezensis).